Reading from the N-terminus, the 223-residue chain is MAAGDGDVKLGTLGSGSESSNDGGSESPGDAGAAAEGGGWAAAALALLTGGGEMLLNVALVALVLLGAYRLWVRWGRRGLGAGAGAGEESPATSLPRMKKRDFSLEQLRQYDGSRNPRILLAVNGKVFDVTKGSKFYGPAGPYGIFAGRDASRGLATFCLDKDALRDEYDDLSDLNAVQMESVREWEMQFKEKYDYVGRLLKPGEEPSEYTDEEDTKDHNKQD.

Residues 1-33 (MAAGDGDVKLGTLGSGSESSNDGGSESPGDAGA) form a disordered region. Residue Ser15 is glycosylated (O-linked (Xyl...) (chondroitin sulfate) serine). Positions 15–33 (SGSESSNDGGSESPGDAGA) are enriched in low complexity. A helical transmembrane segment spans residues 42-66 (AAALALLTGGGEMLLNVALVALVLL). Ser90, Ser104, and Ser208 each carry phosphoserine. Positions 102 to 201 (DFSLEQLRQY…EKYDYVGRLL (100 aa)) constitute a Cytochrome b5 heme-binding domain. The tract at residues 202-223 (KPGEEPSEYTDEEDTKDHNKQD) is disordered. Residues 206–215 (EPSEYTDEED) are compositionally biased toward acidic residues. Tyr210 carries the post-translational modification Phosphotyrosine. The residue at position 211 (Thr211) is a Phosphothreonine.

Belongs to the cytochrome b5 family. MAPR subfamily. Interacts with PGRMC1. Interacts with AAAS. In terms of tissue distribution, expressed by endometrial glands and stroma (at protein level). Detected in urine (at protein level).

The protein localises to the membrane. Its subcellular location is the nucleus envelope. It localises to the endoplasmic reticulum. The protein resides in the secreted. Required for the maintenance of uterine histoarchitecture and normal female reproductive lifespan. May serve as a universal non-classical progesterone receptor in the uterus. Intracellular heme chaperone required for delivery of labile, or signaling heme, to the nucleus. Plays a role in adipocyte function and systemic glucose homeostasis. In brown fat, which has a high demand for heme, delivery of labile heme in the nucleus regulates the activity of heme-responsive transcriptional repressors such as NR1D1 and BACH1. This chain is Membrane-associated progesterone receptor component 2, found in Homo sapiens (Human).